Reading from the N-terminus, the 120-residue chain is Large ribosomal subunit protein uL18 (120 aa).

It belongs to the universal ribosomal protein uL18 family. In terms of assembly, part of the 50S ribosomal subunit; part of the 5S rRNA/L5/L18/L25 subcomplex. Contacts the 5S and 23S rRNAs.

This is one of the proteins that bind and probably mediate the attachment of the 5S RNA into the large ribosomal subunit, where it forms part of the central protuberance. The protein is Large ribosomal subunit protein uL18 of Bacillus licheniformis (strain ATCC 14580 / DSM 13 / JCM 2505 / CCUG 7422 / NBRC 12200 / NCIMB 9375 / NCTC 10341 / NRRL NRS-1264 / Gibson 46).